Here is a 141-residue protein sequence, read N- to C-terminus: Large ribosomal subunit protein uL11 (141 aa).

The protein belongs to the universal ribosomal protein uL11 family. In terms of assembly, part of the ribosomal stalk of the 50S ribosomal subunit. Interacts with L10 and the large rRNA to form the base of the stalk. L10 forms an elongated spine to which L12 dimers bind in a sequential fashion forming a multimeric L10(L12)X complex. Post-translationally, one or more lysine residues are methylated.

Its function is as follows. Forms part of the ribosomal stalk which helps the ribosome interact with GTP-bound translation factors. The chain is Large ribosomal subunit protein uL11 from Prochlorococcus marinus (strain MIT 9515).